Here is a 329-residue protein sequence, read N- to C-terminus: rRNA 2'-O-methyltransferase fibrillarin (329 aa).

The interval 1 to 85 (MAFGAPRGRG…GGARGGARGG (85 aa)) is disordered. The segment covering 13 to 84 (RGGFGGRGGS…RGGARGGARG (72 aa)) has biased composition (gly residues). S-adenosyl-L-methionine contacts are provided by residues 181–182 (TS), 200–201 (EF), 225–226 (DA), and 245–248 (DVAQ).

It belongs to the methyltransferase superfamily. Fibrillarin family. Component of box C/D small nucleolar ribonucleoprotein (snoRNP) particles that contain SNU13, NOP1, SIK1/NOP56 and NOP58, plus a guide RNA. Post-translationally, by homology to other fibrillarins, some or all of the N-terminal domain arginines are modified to asymmetric dimethylarginine (DMA).

It localises to the nucleus. Its subcellular location is the nucleolus. It catalyses the reaction L-glutaminyl-[histone H2A] + S-adenosyl-L-methionine = N(5)-methyl-L-glutaminyl-[histone H2A] + S-adenosyl-L-homocysteine + H(+). S-adenosyl-L-methionine-dependent methyltransferase that has the ability to methylate both RNAs and proteins. Involved in pre-rRNA processing. Utilizes the methyl donor S-adenosyl-L-methionine to catalyze the site-specific 2'-hydroxyl methylation of ribose moieties in pre-ribosomal RNA. Site specificity is provided by a guide RNA that base pairs with the substrate. Methylation occurs at a characteristic distance from the sequence involved in base pairing with the guide RNA. Also acts as a protein methyltransferase by mediating methylation of 'Gln-105' of histone H2A (H2AQ105me), a modification that impairs binding of the FACT complex and is specifically present at 35S ribosomal DNA locus. The sequence is that of rRNA 2'-O-methyltransferase fibrillarin (NOP1) from Debaryomyces hansenii (strain ATCC 36239 / CBS 767 / BCRC 21394 / JCM 1990 / NBRC 0083 / IGC 2968) (Yeast).